Consider the following 1199-residue polypeptide: MNELSVNDAFDDIEIESFDFIWEEWEEYKGDVPLWQHIFCGSIAGLMEHVFMYPLDTLKTYFQTNGHMKYNMIYDNCNTINNNNNNIYRGNNSSYKNTCDKNYKDMNNHRNMQTFKRNFCSSTNCDKCIINNFCKYKTNCYNVMAALHTKNNRYIHNIAEPLKNMANYKINTTNNNNVNNIINNNNNNNKKKSRNIFSYPSHTKQYRNVTYVVNKKMQQNLFNNYISNKCINDPFCCRTKTNVLNMKKDIHKFCHLSKEKYNNVFYQNDTYHPNIYGRKRKTLCRNKNNINLFKNHVHKKYCHSLDDQICHSKIKEDMRNLQNFKNYTCAKNMKRHLYSTVPFFNLKNKGNKNITLPYKEIRSKYILKNGYKSMYQRNAGYYKNLIKMQSAKKNRHQLLALRKCLMSEKKYTIIKNEPFIIRKKKNMRNEYFIGNMKGRCIINTSLNSYTLKRNCLDYHHFVNNLKNICYSIMNICYNIKNTILINPSLPINNNNNNNNNTKMDTFIKLINKCLYNNNAHKIDHKILLSNYLNLFKHTNYSYYYILNNFLKNNAPCTSRKNEWNIFSNFINVLKNKIITNNVDYIRNPNVRRNQILRNNYLYSFLRNYNKNLKRNTHMILNKLTSFKYSIPYIKNKYSNVLINNINTNNNTYSNRNVLNSIRYNNIYKNIMHPIFFPGYYNTIHFRYYNYFSRIIDDKDKGKNKNIINISTKRNNCSSIIRNNLSNLYKGVNVVVLGCIPAHALYFSTFEYSKKYFSRMTSNNSSLKMNNRNISTVSNDIKSEKSNFKLYDLNYFSIAVSGFLATLVHDLIITPIDTLKQRIQLGINKNSKDSLKLLKQNGIRSLYLSLPITLLMNIPYQIIMICTNEKMKKIYFEYICGLNTQNNKKNMENKVIDKVHDETRNQDNIGKDIKNDTYNMDKNGTFLRNQEMINKENRIYNSGALEKHVTSQEKEDKILQSVKQENVSSNNDIVNFYEGQSIYNNDAHNIIRDDINKMTHKNLENNIDNTINSNESDVNRIDNMTNDMNKECDIFSINKNNNSTVLYDQIMKRLEMNSSNKNFSLNFHDKIIRQESSPFEKENYNMNLKNIWIDNYKNDFFNKPFNHITSYFVCAGIGGGIAAVLTNPLDVIKTRIQTECFQTKGFNFFRIVSNIYYREGMRSFFKGSLARMALCIPASAVSWGTYETMKRFFKINFNTT.

The helical transmembrane segment at 32 to 52 (VPLWQHIFCGSIAGLMEHVFM) threads the bilayer. Asn-92, Asn-171, Asn-208, Asn-268, Asn-326, Asn-353, Asn-443, Asn-499, Asn-539, Asn-649, Asn-708, Asn-715, and Asn-723 each carry an N-linked (GlcNAc...) asparagine glycan. A helical transmembrane segment spans residues 730 to 750 (GVNVVVLGCIPAHALYFSTFE). N-linked (GlcNAc...) asparagine glycosylation is found at Asn-763 and Asn-772. Residues 792-873 (LNYFSIAVSG…ICTNEKMKKI (82 aa)) form a Solcar 1 repeat. 2 consecutive transmembrane segments (helical) span residues 795–815 (FSIA…ITPI) and 845–865 (LYLS…IMIC). Residues Asn-914, Asn-922, Asn-965, Asn-1013, Asn-1022, Asn-1041, and Asn-1056 are each glycosylated (N-linked (GlcNAc...) asparagine). Residues 1109 to 1191 (SYFVCAGIGG…WGTYETMKRF (83 aa)) form a Solcar 2 repeat. The helical transmembrane segment at 1111–1131 (FVCAGIGGGIAAVLTNPLDVI) threads the bilayer.

The protein belongs to the mitochondrial carrier (TC 2.A.29) family.

Its subcellular location is the mitochondrion membrane. Its function is as follows. Putative iron transporter. The polypeptide is Putative mitoferrin (Plasmodium falciparum (isolate 3D7)).